Reading from the N-terminus, the 200-residue chain is 3-isopropylmalate dehydratase small subunit (200 aa).

Belongs to the LeuD family. LeuD type 1 subfamily. As to quaternary structure, heterodimer of LeuC and LeuD.

It carries out the reaction (2R,3S)-3-isopropylmalate = (2S)-2-isopropylmalate. Its pathway is amino-acid biosynthesis; L-leucine biosynthesis; L-leucine from 3-methyl-2-oxobutanoate: step 2/4. In terms of biological role, catalyzes the isomerization between 2-isopropylmalate and 3-isopropylmalate, via the formation of 2-isopropylmaleate. This chain is 3-isopropylmalate dehydratase small subunit, found in Vibrio parahaemolyticus serotype O3:K6 (strain RIMD 2210633).